Reading from the N-terminus, the 211-residue chain is Dephospho-CoA kinase (211 aa).

One can recognise a DPCK domain in the interval 3–206; that stretch reads VLGLTGGIGS…PGMKGPDPHA (204 aa). Residue 11–16 participates in ATP binding; that stretch reads GSGKSI.

This sequence belongs to the CoaE family.

It is found in the cytoplasm. The catalysed reaction is 3'-dephospho-CoA + ATP = ADP + CoA + H(+). It functions in the pathway cofactor biosynthesis; coenzyme A biosynthesis; CoA from (R)-pantothenate: step 5/5. Catalyzes the phosphorylation of the 3'-hydroxyl group of dephosphocoenzyme A to form coenzyme A. This chain is Dephospho-CoA kinase, found in Syntrophotalea carbinolica (strain DSM 2380 / NBRC 103641 / GraBd1) (Pelobacter carbinolicus).